A 97-amino-acid chain; its full sequence is Mapk-regulated corepressor-interacting protein 1 (97 aa).

Disordered regions lie at residues 1-29 and 72-97; these read MTSS…NEIF and SNSL…PKKS. The span at 17–28 shows a compositional bias: polar residues; it reads ASNTRSPSSNEI. Over residues 82–97 the composition is skewed to basic and acidic residues; that stretch reads DLNDLKRRTVQDPKKS.

It belongs to the MCRIP family.

Its subcellular location is the nucleus. It is found in the cytoplasm. It localises to the stress granule. Functionally, may play a role in the regulation of the epithelial-mesenchymal transition. This Xenopus tropicalis (Western clawed frog) protein is Mapk-regulated corepressor-interacting protein 1 (Mcrip1).